The chain runs to 202 residues: Cutinase (202 aa).

The N-terminal stretch at 1 to 20 (MKTSAQQLLSALLLPLSVLA) is a signal peptide. Residues C31 and C106 are joined by a disulfide bond. S117 (nucleophile) is an active-site residue. C165 and C172 are joined by a disulfide. D169 is an active-site residue. The active-site Proton donor/acceptor is the H182.

It belongs to the cutinase family. Post-translationally, the 2 disulfide bonds play a critical role in holding the catalytic residues in juxta-position; reduction of the disulfide bridges results in the complete inactivation of the enzyme.

It localises to the secreted. The catalysed reaction is cutin + H2O = cutin monomers.. Functionally, catalyzes the hydrolysis of complex carboxylic polyesters found in the cell wall of plants. Degrades cutin, a macromolecule that forms the structure of the plant cuticle. Allows pathogenic fungi to penetrate through the cuticular barrier into the host plant during the initial stage of fungal infection. The chain is Cutinase from Botryotinia fuckeliana (Noble rot fungus).